The chain runs to 328 residues: DNA-directed RNA polymerase subunit alpha (328 aa).

The interval 1–231 is alpha N-terminal domain (alpha-NTD); sequence MIYQMQMPAK…EHVTFFADFS (231 aa). The tract at residues 252–328 is alpha C-terminal domain (alpha-CTD); sequence MRKLFNTKIE…MDITKYQMKG (77 aa).

The protein belongs to the RNA polymerase alpha chain family. In terms of assembly, homodimer. The RNAP catalytic core consists of 2 alpha, 1 beta, 1 beta' and 1 omega subunit. When a sigma factor is associated with the core the holoenzyme is formed, which can initiate transcription.

The enzyme catalyses RNA(n) + a ribonucleoside 5'-triphosphate = RNA(n+1) + diphosphate. Functionally, DNA-dependent RNA polymerase catalyzes the transcription of DNA into RNA using the four ribonucleoside triphosphates as substrates. The sequence is that of DNA-directed RNA polymerase subunit alpha from Chlorobium limicola (strain DSM 245 / NBRC 103803 / 6330).